Reading from the N-terminus, the 540-residue chain is MLAELGACLLLAMVLLDSDPGTQAMEGVKCGGVLSAPSGNFSSPNFPSLYPYNTECSWLIVVAEGSSVLLTFHAFDLEYHDTCGFDFLEIYNGASGDKGNLLGRFCGQVPPPPFTSSWHVMSVVFHSDKHVASRGFSAGYQKDVCGGVLTGLSGVLSSPEYPNNYPNNVECHWLIRASGPAAVKLVFVDFQVEGSDECMYDYVAVLGAPGPAHGHHYCGRTRPPTFVSLGHELQVVFKSDFNIGGRGFKAHYFSGECQEVFTAVRGNFSSPQYPGAYPNNIRCHWTIRLPPGYRVKVFILDLGLEEPNSLTRTCDFDHLAAFDGASEEAQLLGKWCGHHLPPPVTSSRNQVLLLLHTDRSTSGRGFSVAYIGVVPMNVSCSRTDFQILISAQALAPLERTKVYLGSRSCAAQEVGSNFRIQARFDTCGTESQRRNNTSVIVSVLYIDFSTAGHDDIHEYEVRCEPRRKEASAHLLSGSDLLGPYAATAEHLQEAPPGDEAEVLEGPGTMVTQDTSDIVFLGLCILAGVLMIIAIVVLMLL.

An N-terminal signal peptide occupies residues 1-24; that stretch reads MLAELGACLLLAMVLLDSDPGTQA. Residues 25 to 516 are Extracellular-facing; that stretch reads MEGVKCGGVL…GTMVTQDTSD (492 aa). Cystine bridges form between Cys-30–Cys-56, Cys-83–Cys-106, Cys-145–Cys-171, Cys-198–Cys-218, Cys-257–Cys-283, and Cys-314–Cys-336. CUB domains lie at 30-143, 145-255, and 257-373; these read CGGV…YQKD, CGGV…YFSG, and CQEV…YIGV. N-linked (GlcNAc...) asparagine glycosylation is present at Asn-40. N-linked (GlcNAc...) asparagine glycosylation is present at Asn-267. N-linked (GlcNAc...) asparagine glycans are attached at residues Asn-377, Asn-435, and Asn-436. The helical transmembrane segment at 517-537 threads the bilayer; that stretch reads IVFLGLCILAGVLMIIAIVVL. Residues 538 to 540 are Cytoplasmic-facing; that stretch reads MLL.

The protein resides in the membrane. In Mus musculus (Mouse), this protein is CUB domain-containing protein 2 (Cdcp2).